Consider the following 325-residue polypeptide: Ribonucleoside-diphosphate reductase small chain (325 aa).

Fe cation contacts are provided by Asp74, Glu105, and His108. Tyr112 is an active-site residue. Fe cation contacts are provided by Glu168, Glu202, and His205.

This sequence belongs to the ribonucleoside diphosphate reductase small chain family. Heterodimer of a large and a small chain. Fe cation is required as a cofactor.

It catalyses the reaction a 2'-deoxyribonucleoside 5'-diphosphate + [thioredoxin]-disulfide + H2O = a ribonucleoside 5'-diphosphate + [thioredoxin]-dithiol. In terms of biological role, ribonucleoside-diphosphate reductase holoenzyme provides the precursors necessary for viral DNA synthesis. Allows virus growth in non-dividing cells. Catalyzes the biosynthesis of deoxyribonucleotides from the corresponding ribonucleotides. The sequence is that of Ribonucleoside-diphosphate reductase small chain from Yaba-like disease virus (YLDV).